The sequence spans 252 residues: 4-hydroxy-tetrahydrodipicolinate reductase (252 aa).

Residues 8–13 (GCCGKM), 84–86 (CST), and 108–111 (SANM) contribute to the NAD(+) site. His141 (proton donor/acceptor) is an active-site residue. Residue His142 participates in (S)-2,3,4,5-tetrahydrodipicolinate binding. Lys145 acts as the Proton donor in catalysis. Position 151 to 152 (151 to 152 (GT)) interacts with (S)-2,3,4,5-tetrahydrodipicolinate.

It belongs to the DapB family.

The protein localises to the cytoplasm. It carries out the reaction (S)-2,3,4,5-tetrahydrodipicolinate + NAD(+) + H2O = (2S,4S)-4-hydroxy-2,3,4,5-tetrahydrodipicolinate + NADH + H(+). The catalysed reaction is (S)-2,3,4,5-tetrahydrodipicolinate + NADP(+) + H2O = (2S,4S)-4-hydroxy-2,3,4,5-tetrahydrodipicolinate + NADPH + H(+). Its pathway is amino-acid biosynthesis; L-lysine biosynthesis via DAP pathway; (S)-tetrahydrodipicolinate from L-aspartate: step 4/4. Its function is as follows. Catalyzes the conversion of 4-hydroxy-tetrahydrodipicolinate (HTPA) to tetrahydrodipicolinate. This is 4-hydroxy-tetrahydrodipicolinate reductase from Clostridium botulinum (strain Eklund 17B / Type B).